We begin with the raw amino-acid sequence, 400 residues long: Elongation factor Tu (400 aa).

The 200-residue stretch at 10 to 209 (KPHVNIGTIG…EVDNYIPTPE (200 aa)) folds into the tr-type G domain. A G1 region spans residues 19–26 (GHVDHGKT). 19 to 26 (GHVDHGKT) lines the GTP pocket. Thr26 provides a ligand contact to Mg(2+). Residues 60–64 (GITIN) form a G2 region. The segment at 81-84 (DCPG) is G3. GTP contacts are provided by residues 81–85 (DCPGH) and 136–139 (NKCD). Residues 136–139 (NKCD) form a G4 region. Residues 174–176 (SAL) form a G5 region.

Belongs to the TRAFAC class translation factor GTPase superfamily. Classic translation factor GTPase family. EF-Tu/EF-1A subfamily. Monomer.

The protein resides in the cytoplasm. It carries out the reaction GTP + H2O = GDP + phosphate + H(+). Functionally, GTP hydrolase that promotes the GTP-dependent binding of aminoacyl-tRNA to the A-site of ribosomes during protein biosynthesis. The protein is Elongation factor Tu of Ruminiclostridium cellulolyticum (strain ATCC 35319 / DSM 5812 / JCM 6584 / H10) (Clostridium cellulolyticum).